We begin with the raw amino-acid sequence, 242 residues long: Probable 2-phosphosulfolactate phosphatase (242 aa).

Belongs to the ComB family. It depends on Mg(2+) as a cofactor.

It carries out the reaction (2R)-O-phospho-3-sulfolactate + H2O = (2R)-3-sulfolactate + phosphate. In Synechococcus sp. (strain JA-3-3Ab) (Cyanobacteria bacterium Yellowstone A-Prime), this protein is Probable 2-phosphosulfolactate phosphatase.